Here is a 692-residue protein sequence, read N- to C-terminus: Chaperone protein dnaK1 (692 aa).

Threonine 197 bears the Phosphothreonine; by autocatalysis mark.

The protein belongs to the heat shock protein 70 family.

In terms of biological role, acts as a chaperone. This is Chaperone protein dnaK1 (dnaK1) from Synechocystis sp. (strain ATCC 27184 / PCC 6803 / Kazusa).